Consider the following 460-residue polypeptide: 3-isopropylmalate dehydratase large subunit (460 aa).

3 residues coordinate [4Fe-4S] cluster: Cys-338, Cys-398, and Cys-401.

It belongs to the aconitase/IPM isomerase family. LeuC type 1 subfamily. In terms of assembly, heterodimer of LeuC and LeuD. [4Fe-4S] cluster serves as cofactor.

It carries out the reaction (2R,3S)-3-isopropylmalate = (2S)-2-isopropylmalate. The protein operates within amino-acid biosynthesis; L-leucine biosynthesis; L-leucine from 3-methyl-2-oxobutanoate: step 2/4. Functionally, catalyzes the isomerization between 2-isopropylmalate and 3-isopropylmalate, via the formation of 2-isopropylmaleate. The protein is 3-isopropylmalate dehydratase large subunit of Streptococcus thermophilus (strain CNRZ 1066).